Consider the following 184-residue polypeptide: Large ribosomal subunit protein uL5 (184 aa).

This sequence belongs to the universal ribosomal protein uL5 family. Part of the 50S ribosomal subunit; part of the 5S rRNA/L5/L18/L25 subcomplex. Contacts the 5S rRNA and the P site tRNA. Forms a bridge to the 30S subunit in the 70S ribosome.

Functionally, this is one of the proteins that bind and probably mediate the attachment of the 5S RNA into the large ribosomal subunit, where it forms part of the central protuberance. In the 70S ribosome it contacts protein S13 of the 30S subunit (bridge B1b), connecting the 2 subunits; this bridge is implicated in subunit movement. Contacts the P site tRNA; the 5S rRNA and some of its associated proteins might help stabilize positioning of ribosome-bound tRNAs. This Ureaplasma urealyticum serovar 10 (strain ATCC 33699 / Western) protein is Large ribosomal subunit protein uL5.